The following is a 129-amino-acid chain: Putative pre-16S rRNA nuclease (129 aa).

Belongs to the YqgF nuclease family.

The protein resides in the cytoplasm. Functionally, could be a nuclease involved in processing of the 5'-end of pre-16S rRNA. This chain is Putative pre-16S rRNA nuclease, found in Campylobacter jejuni subsp. doylei (strain ATCC BAA-1458 / RM4099 / 269.97).